The sequence spans 457 residues: ATP-dependent protease ATPase subunit HslU (457 aa).

Residues Val21, 63 to 68 (GVGKTE), Asp269, Glu335, and Arg407 contribute to the ATP site.

It belongs to the ClpX chaperone family. HslU subfamily. In terms of assembly, a double ring-shaped homohexamer of HslV is capped on each side by a ring-shaped HslU homohexamer. The assembly of the HslU/HslV complex is dependent on binding of ATP.

Its subcellular location is the cytoplasm. Its function is as follows. ATPase subunit of a proteasome-like degradation complex; this subunit has chaperone activity. The binding of ATP and its subsequent hydrolysis by HslU are essential for unfolding of protein substrates subsequently hydrolyzed by HslV. HslU recognizes the N-terminal part of its protein substrates and unfolds these before they are guided to HslV for hydrolysis. The protein is ATP-dependent protease ATPase subunit HslU of Desulfotalea psychrophila (strain LSv54 / DSM 12343).